Here is a 281-residue protein sequence, read N- to C-terminus: Pantothenate synthetase (281 aa).

30–37 (MGYLHEGH) provides a ligand contact to ATP. The active-site Proton donor is His37. Gln60 lines the (R)-pantoate pocket. Gln60 is a beta-alanine binding site. Residue 146 to 149 (GEKD) coordinates ATP. A (R)-pantoate-binding site is contributed by Gln152. Residues Ile175 and 183-186 (KSSR) each bind ATP.

It belongs to the pantothenate synthetase family. As to quaternary structure, homodimer.

It localises to the cytoplasm. The catalysed reaction is (R)-pantoate + beta-alanine + ATP = (R)-pantothenate + AMP + diphosphate + H(+). It functions in the pathway cofactor biosynthesis; (R)-pantothenate biosynthesis; (R)-pantothenate from (R)-pantoate and beta-alanine: step 1/1. Catalyzes the condensation of pantoate with beta-alanine in an ATP-dependent reaction via a pantoyl-adenylate intermediate. The protein is Pantothenate synthetase of Ruminiclostridium cellulolyticum (strain ATCC 35319 / DSM 5812 / JCM 6584 / H10) (Clostridium cellulolyticum).